The chain runs to 360 residues: Chorismate synthase (360 aa).

Arg-47 contributes to the NADP(+) binding site. FMN contacts are provided by residues 124–126 (RSS), 240–241 (NA), Gly-285, 300–304 (KPVAT), and Arg-326.

The protein belongs to the chorismate synthase family. As to quaternary structure, homotetramer. Requires FMNH2 as cofactor.

It carries out the reaction 5-O-(1-carboxyvinyl)-3-phosphoshikimate = chorismate + phosphate. Its pathway is metabolic intermediate biosynthesis; chorismate biosynthesis; chorismate from D-erythrose 4-phosphate and phosphoenolpyruvate: step 7/7. Catalyzes the anti-1,4-elimination of the C-3 phosphate and the C-6 proR hydrogen from 5-enolpyruvylshikimate-3-phosphate (EPSP) to yield chorismate, which is the branch point compound that serves as the starting substrate for the three terminal pathways of aromatic amino acid biosynthesis. This reaction introduces a second double bond into the aromatic ring system. This is Chorismate synthase from Cytophaga hutchinsonii (strain ATCC 33406 / DSM 1761 / CIP 103989 / NBRC 15051 / NCIMB 9469 / D465).